Here is a 349-residue protein sequence, read N- to C-terminus: MAHQTGIHATPELKEFFAKARNGSVRLIKVIIEEEQLVLGSHKELKHAWDQDYDAFVLQLLDESQPCYILYRLDSQNAQGYEWIFLSWSPDHSPVRLKMLYAATRATVKKEFGGGHIKDEIFGTLKEDVALSGYKKHVSSCAAPAPLTAAERELQAIKINEVKTEISVESKQQTLQGLSFPLRPQAEEAILLLKQKKINYIQLRLDLEKETVDLVHTKHTEIQDLPGRIPQDTARYHFFLYKHSHEGDHLESVVFIYSMPGYKCSIKERMLYSSCKNRLLDSVEQDFLMEIAKKIEIEDGAELTDEFLYDEVHPKQHAFKQAFAKPKGPAGKRGQKRLIKGPGENGEDS.

ADF-H domains follow at residues 4–139 (QTGI…KHVS) and 177–313 (GLSF…DEVH). Residues 321 to 349 (QAFAKPKGPAGKRGQKRLIKGPGENGEDS) are disordered.

This sequence belongs to the actin-binding proteins ADF family. Twinfilin subfamily. Interacts with G-actin; ADP-actin form and capping protein (CP).

It localises to the cytoplasm. It is found in the cytoskeleton. The protein localises to the perinuclear region. Actin-binding protein involved in motile and morphological processes. Inhibits actin polymerization, likely by sequestering G-actin. The polypeptide is Twinfilin-2-B (twf2-b) (Xenopus laevis (African clawed frog)).